Reading from the N-terminus, the 472-residue chain is Glutamate--tRNA ligase (472 aa).

Residues 18–28 (PSPTGYLHIGG) carry the 'HIGH' region motif. Over residues 122–138 (RARGEKPRYDGRWRPEP) the composition is skewed to basic and acidic residues. A disordered region spans residues 122 to 150 (RARGEKPRYDGRWRPEPGKTLPVPPSGVQ). The short motif at 250-254 (KLSKR) is the 'KMSKS' region element. An ATP-binding site is contributed by K253.

This sequence belongs to the class-I aminoacyl-tRNA synthetase family. Glutamate--tRNA ligase type 1 subfamily. Monomer.

It localises to the cytoplasm. The enzyme catalyses tRNA(Glu) + L-glutamate + ATP = L-glutamyl-tRNA(Glu) + AMP + diphosphate. In terms of biological role, catalyzes the attachment of glutamate to tRNA(Glu) in a two-step reaction: glutamate is first activated by ATP to form Glu-AMP and then transferred to the acceptor end of tRNA(Glu). This Thiobacillus denitrificans (strain ATCC 25259 / T1) protein is Glutamate--tRNA ligase.